The sequence spans 133 residues: MRCRVYYEDTDSEGVVYHANYLKYCERARSEFFFKQNVLPENEEGVFVIRSIKADFFTPASLGQVLEIRTQIKELRKVFVVLFQEIYCIQNASLEPMKPFKVFASEIKFGFVNRSTYSPIAIPKLFKELLNAI.

Asp11 is a catalytic residue.

This sequence belongs to the 4-hydroxybenzoyl-CoA thioesterase family. In terms of assembly, homotetramer. May interact with CagA.

Thioesterase that may be involved in phospholipid metabolism. Displays acyl-CoA thioesterase activity with lauroyl-CoA (C12:0), myristoyl-CoA (C14:0), palmitoyl-CoA (C16:0), stearoyl-CoA (C18:0) and benzoyl-CoA, catalyzing the hydrolysis of the thioester bond. Has low activity with butyryl-CoA and octanoyl-CoA. The polypeptide is Acyl-CoA thioesterase YbgC (ybgC) (Helicobacter pylori (strain ATCC 700392 / 26695) (Campylobacter pylori)).